The following is a 333-amino-acid chain: DnaJ homolog subfamily C member 25 homolog (333 aa).

The helical transmembrane segment at 8 to 28 threads the bilayer; that stretch reads LVLLALLPTMALGLLEGLYCG. Positions 31–99 constitute a J domain; the sequence is NCYDVLGVTR…ESRTDYDYML (69 aa). A helical membrane pass occupies residues 123–143; sequence VRVVIVVVLTIVSVIQYYSGW. Residues 158–208 adopt a coiled-coil conformation; that stretch reads KYRNQALEIARDEIQEKIQKKGKNRMSKNDQRDELERIIRRVIEEKMDVKG. Residues 218–238 traverse the membrane as a helical segment; it reads VLWVQLIICPYTILSFIVWHA.

It belongs to the DNAJC25 family.

It is found in the membrane. This is DnaJ homolog subfamily C member 25 homolog from Drosophila melanogaster (Fruit fly).